Here is a 92-residue protein sequence, read N- to C-terminus: Small nuclear ribonucleoprotein E (92 aa).

One can recognise a Sm domain in the interval 18-92; that stretch reads INLIFRYLQN…NITLLQSVSN (75 aa).

It belongs to the snRNP Sm proteins family. In terms of assembly, core component of the spliceosomal U1, U2, U4 and U5 small nuclear ribonucleoproteins (snRNPs), the building blocks of the spliceosome. Most spliceosomal snRNPs contain a common set of Sm proteins, snrpb, snrpd1, snrpd2, snrpd3, snrpe, snrpf and snrpg that assemble in a heptameric protein ring on the Sm site of the small nuclear RNA to form the core snRNP. Component of the U1 snRNP. The U1 snRNP is composed of the U1 snRNA and the 7 core Sm proteins snrpb, snrpd1, snrpd2, snrpd3, snrpe, snrpf and snrpg, and at least three U1 snRNP-specific proteins snrnp70/u1-70k, snrpa/u1-a and snrpc/u1-c. Component of the U4/U6-U5 tri-snRNP complex composed of the U4, U6 and U5 snRNAs and at least prpf3, prpf4, prpf6, prpf8, prpf31, snrnp200, txnl4a, snrnp40, snrpb, snrpd1, snrpd2, snrpd3, snrpe, snrpf, snrpg, ddx23, cd2bp2, ppih, snu13, eftud2, sart1 and usp39, plus lsm2, lsm3, lsm4, lsm5, lsm6, lsm7 and lsm8. Component of the U7 snRNP complex, or U7 Sm protein core complex, that is composed of the U7 snRNA and at least lsm10, lsm11, snrpb, snrpd3, snrpe, snrpf and snrpg; the complex does not contain snrpd1 and snrpd2. Component of the minor spliceosome, which splices U12-type introns. Part of the SMN-Sm complex that contains smn1, gemin2/sip1, ddx20/gemin3, gemin4, gemin5, gemin6, gemin7, gemin8, strap/unrip and the Sm proteins snrpb, snrpd1, snrpd2, snrpd3, snrpe, snrpf and snrpg; catalyzes core snRNPs assembly. Forms a 6S pICln-Sm complex composed of clns1a/pICln, snrpd1, snrpd2, snrpe, snrpf and snrpg; ring-like structure where clns1a/pICln mimics additional Sm proteins and which is unable to assemble into the core snRNP.

It localises to the cytoplasm. The protein resides in the cytosol. It is found in the nucleus. In terms of biological role, plays a role in pre-mRNA splicing as a core component of the spliceosomal U1, U2, U4 and U5 small nuclear ribonucleoproteins (snRNPs), the building blocks of the spliceosome. Component of both the pre-catalytic spliceosome B complex and activated spliceosome C complexes. As a component of the minor spliceosome, involved in the splicing of U12-type introns in pre-mRNAs. As part of the U7 snRNP it is involved in histone 3'-end processing. This chain is Small nuclear ribonucleoprotein E (snrpe), found in Danio rerio (Zebrafish).